The chain runs to 380 residues: MTTSTRGAHRTPAVLVLEDGRIFRGRAYGAVGATFGEAVFSTGMTGYQETLTDPSYHRQVVVMTAPHVGNTGINDEDMESRRIWVSGYVVRDPARVPSNWRSTRSLDQELAAQGVVGISGIDTRALTRHLRERGAMRVGIFSGNALPDEGTMLAEVRQTPEMSGADLSAEVATTEAYVVPAIGEKKFTVAAVDLGIKGMTPHRMAERGIEVHVLPATATVDDVYAVEPDGVFFSNGPGDPATADHPVSVMQGVLERGTPLFGICFGNQILGRALGFGTFKLKYGHRGINQPVQDRTTGKVEVTAHNHGFAVDAPLDQVSDTPYGRAEVSHVCLNDNVVEGLQLLDRPAFSVQYHPEAAAGPHDAAYLFDRFVNLMEGQRA.

The CPSase stretch occupies residues 1 to 184; the sequence is MTTSTRGAHR…EAYVVPAIGE (184 aa). S55, G236, and G238 together coordinate L-glutamine. A Glutamine amidotransferase type-1 domain is found at 188-380; it reads TVAAVDLGIK…FVNLMEGQRA (193 aa). Catalysis depends on C264, which acts as the Nucleophile. Residues F265, Q268, N306, G308, and F309 each contribute to the L-glutamine site. Residues H354 and E356 contribute to the active site.

This sequence belongs to the CarA family. In terms of assembly, composed of two chains; the small (or glutamine) chain promotes the hydrolysis of glutamine to ammonia, which is used by the large (or ammonia) chain to synthesize carbamoyl phosphate. Tetramer of heterodimers (alpha,beta)4.

It carries out the reaction hydrogencarbonate + L-glutamine + 2 ATP + H2O = carbamoyl phosphate + L-glutamate + 2 ADP + phosphate + 2 H(+). The enzyme catalyses L-glutamine + H2O = L-glutamate + NH4(+). Its pathway is amino-acid biosynthesis; L-arginine biosynthesis; carbamoyl phosphate from bicarbonate: step 1/1. The protein operates within pyrimidine metabolism; UMP biosynthesis via de novo pathway; (S)-dihydroorotate from bicarbonate: step 1/3. Small subunit of the glutamine-dependent carbamoyl phosphate synthetase (CPSase). CPSase catalyzes the formation of carbamoyl phosphate from the ammonia moiety of glutamine, carbonate, and phosphate donated by ATP, constituting the first step of 2 biosynthetic pathways, one leading to arginine and/or urea and the other to pyrimidine nucleotides. The small subunit (glutamine amidotransferase) binds and cleaves glutamine to supply the large subunit with the substrate ammonia. The polypeptide is Carbamoyl phosphate synthase small chain (Streptomyces coelicolor (strain ATCC BAA-471 / A3(2) / M145)).